A 360-amino-acid polypeptide reads, in one-letter code: MDAIRAQLDEFLGKDRNLLPKDRIKVENDFNDPDICKFFLCGLCPHELFTNANIRDLGPCSKLHDENCVKQYQNNKDKDKYDYEREWVRVIEGLISDNDKKIKRNKERLLQNPNGDANHHGGPIQQQSISQLDDEEGGLLPDKEQNSKITELDLKIQELLKKAEELGEEGQITEAQALMTEADELKNQKVELEKIEQEKNENKRMSVCEICGALLFVGDKEKRSISHLEGKKHIGFQKIREVMEEYYKSGRRANLGRTDFYNAPPPPRDSYRDDRRSSSSSYHDIDGRRDHRYGGGSRDYGGSDRRGGGNYNNGRGSSRDNYNNINNSRDYRNDHGKDYDRKRERDYYNDDDRRKRDRNY.

Residues 143–206 (KEQNSKITEL…QEKNENKRMS (64 aa)) are a coiled coil. Residues 255–360 (LGRTDFYNAP…DDRRKRDRNY (106 aa)) are disordered. The span at 269 to 293 (DSYRDDRRSSSSSYHDIDGRRDHRY) shows a compositional bias: basic and acidic residues. Residues 312 to 321 (NNGRGSSRDN) are compositionally biased toward low complexity. The span at 329–360 (RDYRNDHGKDYDRKRERDYYNDDDRRKRDRNY) shows a compositional bias: basic and acidic residues.

The protein belongs to the Luc7 family.

It localises to the nucleus. In terms of biological role, may play a role in RNA splicing. This chain is Luc7-like protein (crop), found in Dictyostelium discoideum (Social amoeba).